A 590-amino-acid polypeptide reads, in one-letter code: MHRYRSHTCGALRDSHIDQTVRLSGWCHRIRDHGGVLFIDLRDHYGLTQCVADPDSPAFALAEKLRSEWVVRIDGKARRRPAGTENPELPTGDVEIYVTEIEVLGPAAELPLPVFGEQEYPEDIRLKYRFLDLRRENLHQNIMTRGAIVDSMRKRMKEQGFFEFQTPILTASSPEGARDFLVPSRIHPGKFYALPQAPQQYKQLLMMSGFDRYFQIAPCFRDEDPRADRLPGEFYQLDLEMSFVEQDDVFAAVEPVITGVFEEFAKGKPVTRNWPRIPFAESLRKYGTDKPDLRNPLLMQDVSEHFRGSGFKVFARMLEDSKNQVWAIPGPGGGSRAFCDRMNSWAQGEGQPGLGYIMWREGGEGAGPLANNIGPERTEAIRVQLGLKAGDAAFFVAGDPAKFWKFAGLARTRLGEELNLIDKDRFELAWIVDFPMYEYNEEDKKVDFSHNPFSMPQGGLDALNTQDPLTIKAFQYDITCNGYEIASGGIRNHRPEAMVKAFEIAGYGENDVVERFGGMYRAFQYGAPPHGGMAAGVDRIVMLLCGTNNLREISLFPMNQRAEDLLMGAPSEVAPKQLRELHIRLNLPQN.

An L-aspartate-binding site is contributed by E175. The segment at 199–202 is aspartate; sequence QQYK. L-aspartate contacts are provided by R221 and H450. 221–223 provides a ligand contact to ATP; that stretch reads RDE. E484 contacts ATP. Position 491 (R491) interacts with L-aspartate. ATP is bound at residue 536-539; the sequence is GVDR.

This sequence belongs to the class-II aminoacyl-tRNA synthetase family. Type 1 subfamily. As to quaternary structure, homodimer.

The protein localises to the cytoplasm. The enzyme catalyses tRNA(Asx) + L-aspartate + ATP = L-aspartyl-tRNA(Asx) + AMP + diphosphate. Functionally, aspartyl-tRNA synthetase with relaxed tRNA specificity since it is able to aspartylate not only its cognate tRNA(Asp) but also tRNA(Asn). Reaction proceeds in two steps: L-aspartate is first activated by ATP to form Asp-AMP and then transferred to the acceptor end of tRNA(Asp/Asn). This is Aspartate--tRNA(Asp/Asn) ligase from Nitrobacter winogradskyi (strain ATCC 25391 / DSM 10237 / CIP 104748 / NCIMB 11846 / Nb-255).